Here is a 186-residue protein sequence, read N- to C-terminus: Casparian strip membrane protein 3 (186 aa).

At Met1–Ser26 the chain is on the cytoplasmic side. Residues Ile27 to Met47 form a helical membrane-spanning segment. The Extracellular portion of the chain corresponds to Gly48–Arg74. Residues Phe75 to Ile95 traverse the membrane as a helical segment. At Leu96 to Arg107 the chain is on the cytoplasmic side. Residues Val108–Ala128 traverse the membrane as a helical segment. At Ala129–Ser161 the chain is on the extracellular side. A helical membrane pass occupies residues Leu162–Val182. Topologically, residues Leu183–Arg186 are cytoplasmic.

It belongs to the Casparian strip membrane proteins (CASP) family. In terms of assembly, homodimer and heterodimers.

Its subcellular location is the cell membrane. Regulates membrane-cell wall junctions and localized cell wall deposition. Required for establishment of the Casparian strip membrane domain (CSD) and the subsequent formation of Casparian strips, a cell wall modification of the root endodermis that determines an apoplastic barrier between the intraorganismal apoplasm and the extraorganismal apoplasm and prevents lateral diffusion. The sequence is that of Casparian strip membrane protein 3 from Medicago truncatula (Barrel medic).